A 345-amino-acid chain; its full sequence is N-acetyl-gamma-glutamyl-phosphate reductase (345 aa).

Cysteine 149 is an active-site residue.

The protein belongs to the NAGSA dehydrogenase family. Type 1 subfamily.

The protein resides in the cytoplasm. It catalyses the reaction N-acetyl-L-glutamate 5-semialdehyde + phosphate + NADP(+) = N-acetyl-L-glutamyl 5-phosphate + NADPH + H(+). Its pathway is amino-acid biosynthesis; L-arginine biosynthesis; N(2)-acetyl-L-ornithine from L-glutamate: step 3/4. Its function is as follows. Catalyzes the NADPH-dependent reduction of N-acetyl-5-glutamyl phosphate to yield N-acetyl-L-glutamate 5-semialdehyde. This is N-acetyl-gamma-glutamyl-phosphate reductase from Bacillus anthracis.